The chain runs to 345 residues: MRLVVDGFGKYLGIENGLIVVKEKGKALRKVRPEDLKQVLIIGKAAISSDAIKLLLKNRVDVVFLDFNGEILGRLSHPLIGTAKTRREQYLAYGDKRGVHLAKEFIKAKMANQMAILTNLAKARKDSNPEVAESLLKAKKEIDACLNELDGVEAEMIDKVRERLLGIEGKASKHYWDAISLVIPEEYRFNGRRGIEIGSPRYAKDIVNAMLNYGYSILLAECVKAVELAGLDPYAGFLHVDVSGRSSLAIDLMENFRQQVVDRVVLRLISYRQIKPEDCEKRNMVCQLSDNARRLLLASLLERLDSKTQYRGRNLAYSSIILLHARDVVAFLRGERRYEGFVQKW.

Positions 168, 239, and 254 each coordinate a divalent metal cation.

The protein belongs to the CRISPR-associated endonuclease Cas1 family. In terms of assembly, forms a heterotetramer with a Cas2 homodimer. Homodimer. Requires a divalent metal cation as cofactor.

Functionally, CRISPR (clustered regularly interspaced short palindromic repeat), is an adaptive immune system that provides protection against mobile genetic elements (viruses, transposable elements and conjugative plasmids). CRISPR clusters contain sequences complementary to antecedent mobile elements and target invading nucleic acids. CRISPR clusters are transcribed and processed into CRISPR RNA (crRNA). Involved in the integration of spacer DNA into the CRISPR cassette. Acts as a dsDNA and ssRNA nuclease, binds to linear and circular dsDNA and linear ssRNA and ssDNA. The sequence is that of CRISPR-associated endonuclease Cas1 1 from Archaeoglobus fulgidus (strain ATCC 49558 / DSM 4304 / JCM 9628 / NBRC 100126 / VC-16).